Here is a 265-residue protein sequence, read N- to C-terminus: MTIRIVIAGPRGRMGREAVALVQRTDHFELAAVIDRRYDGQNLADIDGFAGIDAPIYTDAVRCFTEVKPDVLIDLTTPEVGKRHAELALRYGVRPVIGTTGFTPEDIERLTELAETNEIGAIIAPNFAVGAVLMMKFARMAAKYFTDVEIIELHHDQKLDAPSGTALKTAQLIAEVRPSKKQGHPDEKETLAGARGAAYDGIPIHSVRLPGFVAHQEVIFGGEGQTLTIRHDSLDRRSFMSGVKLAVETVMHLHTLVYGLEHILE.

Glycine 9 to methionine 14 provides a ligand contact to NAD(+). Arginine 37 contacts NADP(+). NAD(+) contacts are provided by residues glycine 98–threonine 100 and alanine 124–phenylalanine 127. The active-site Proton donor/acceptor is the histidine 154. Residue histidine 155 coordinates (S)-2,3,4,5-tetrahydrodipicolinate. Lysine 158 acts as the Proton donor in catalysis. Glycine 164–threonine 165 is a (S)-2,3,4,5-tetrahydrodipicolinate binding site.

The protein belongs to the DapB family.

The protein resides in the cytoplasm. The catalysed reaction is (S)-2,3,4,5-tetrahydrodipicolinate + NAD(+) + H2O = (2S,4S)-4-hydroxy-2,3,4,5-tetrahydrodipicolinate + NADH + H(+). The enzyme catalyses (S)-2,3,4,5-tetrahydrodipicolinate + NADP(+) + H2O = (2S,4S)-4-hydroxy-2,3,4,5-tetrahydrodipicolinate + NADPH + H(+). The protein operates within amino-acid biosynthesis; L-lysine biosynthesis via DAP pathway; (S)-tetrahydrodipicolinate from L-aspartate: step 4/4. Its function is as follows. Catalyzes the conversion of 4-hydroxy-tetrahydrodipicolinate (HTPA) to tetrahydrodipicolinate. The protein is 4-hydroxy-tetrahydrodipicolinate reductase of Geobacillus thermodenitrificans (strain NG80-2).